Consider the following 415-residue polypeptide: Squalene synthase 2 (415 aa).

A run of 2 helical transmembrane segments spans residues 281 to 301 (AIFR…ALCY) and 392 to 412 (LIVI…SNLP).

Belongs to the phytoene/squalene synthase family. Mg(2+) serves as cofactor. Requires Mn(2+) as cofactor.

Its subcellular location is the endoplasmic reticulum membrane. It carries out the reaction 2 (2E,6E)-farnesyl diphosphate + NADH + H(+) = squalene + 2 diphosphate + NAD(+). The enzyme catalyses 2 (2E,6E)-farnesyl diphosphate + NADPH + H(+) = squalene + 2 diphosphate + NADP(+). It participates in terpene metabolism; lanosterol biosynthesis; lanosterol from farnesyl diphosphate: step 1/3. Its function is as follows. Component of the triterpene saponins (e.g. ginsenosides or panaxosides) and phytosterols biosynthetic pathways. Catalyzes the biosynthesis of squalene. The protein is Squalene synthase 2 of Panax ginseng (Korean ginseng).